We begin with the raw amino-acid sequence, 203 residues long: MKLRWFAFLVVILAGCSSKQDYRNPPWNAEVPVKRAMQWMPISEKAGAAWGVDPHLITAIIAIESGGNPNAVSKSNAIGLMQLKASTSGRDVYRRMGWRGEPTTSELKNPERNISMGAAYLSILENGPLAGIKDPQVMQYALVVSYANGAGALLRTFSSDRKKAIEKINDLDADEFFEHVVDNHPAPQAPRYIWKLQQALDAM.

The first 15 residues, 1 to 15 (MKLRWFAFLVVILAG), serve as a signal peptide directing secretion. A lipid anchor (N-palmitoyl cysteine) is attached at Cys16. Cys16 is lipidated: S-diacylglycerol cysteine.

The protein belongs to the transglycosylase Slt family.

It is found in the cell outer membrane. It catalyses the reaction Endolytic cleavage of the (1-&gt;4)-beta-glycosidic linkage between N-acetylmuramic acid (MurNAc) and N-acetylglucosamine (GlcNAc) residues in peptidoglycan with concomitant formation of a 1,6-anhydrobond in the MurNAc residue.. Murein-degrading enzyme. May play a role in recycling of muropeptides during cell elongation and/or cell division. Preferentially cleaves at a distance of more than two disaccharide units from the ends of the glycan chain. The sequence is that of Endo-type membrane-bound lytic murein transglycosylase A from Salmonella paratyphi C (strain RKS4594).